A 257-amino-acid polypeptide reads, in one-letter code: Protein YIPF5 (257 aa).

The Cytoplasmic segment spans residues 1-124 (MSGFDNLNSG…RASDGSIMNE (124 aa)). The segment at 75 to 106 (PPTPQTFYGDSFEEEPPLLEELGINFDHIWQK) is interaction with Sec23. The helical transmembrane segment at 125-145 (TDLAGPVVFCLAFGATLLLAG) threads the bilayer. A topological domain (lumenal) is located at residue K146. The chain crosses the membrane as a helical span at residues 147-167 (IQFGYVYGISAIGCLGMFCLL). Topologically, residues 168–173 (NLMSMT) are cytoplasmic. The chain crosses the membrane as a helical span at residues 174–194 (GVSFGCVASVLGYCLLPMILL). The Lumenal portion of the chain corresponds to 195–196 (SS). The helical transmembrane segment at 197-217 (FAVVFSLQGMVGILLTATIIG) threads the bilayer. The Cytoplasmic segment spans residues 218-236 (WCSFSASKIFISALAMDGQ). The chain crosses the membrane as a helical span at residues 237 to 257 (QLLVAYPCALLYGVFALISVF).

The protein belongs to the YIP1 family. In terms of assembly, interacts with the COPII coat components Sec23 (SEC23A and/or SEC23B) and Sec24 (SEC24A and/or SEC24B). Interacts with YIF1A. May interact with RAB1A. Interacts with YIPF3 and YIPF4.

The protein localises to the endoplasmic reticulum membrane. It localises to the golgi apparatus. Its subcellular location is the cis-Golgi network membrane. The protein resides in the cytoplasmic vesicle. It is found in the COPII-coated vesicle. Its function is as follows. Plays a role in transport between endoplasmic reticulum and Golgi. In pancreatic beta cells, required to transport proinsulin from endoplasmic reticulum into the Golgi. This Rattus norvegicus (Rat) protein is Protein YIPF5.